We begin with the raw amino-acid sequence, 342 residues long: AA9 family lytic polysaccharide monooxygenase H (342 aa).

An N-terminal signal peptide occupies residues 1–19 (MSKASALLAGLTGAALVAA). Residues H20 and H106 each contribute to the Cu(2+) site. Intrachain disulfides connect C75–C195 and C117–C121. The O2 site is built by H181 and Q190. Y192 contacts Cu(2+). The interval 263–308 (ATVPGGGGANPTATTTAATSAAPSTTLRTTTTSAAQTTAPPSGDVQ) is disordered. Low complexity predominate over residues 272–305 (NPTATTTAATSAAPSTTLRTTTTSAAQTTAPPSG). Residues 306–342 (DVQTKYGQCGGNGWTGPTVCAPGSSCSVLNEWYSQCL) form the CBM1 domain.

This sequence belongs to the polysaccharide monooxygenase AA9 family. Cu(2+) is required as a cofactor.

It is found in the secreted. The enzyme catalyses [(1-&gt;4)-beta-D-glucosyl]n+m + reduced acceptor + O2 = 4-dehydro-beta-D-glucosyl-[(1-&gt;4)-beta-D-glucosyl]n-1 + [(1-&gt;4)-beta-D-glucosyl]m + acceptor + H2O.. With respect to regulation, the presence of lignin presents a significant source of antioxidants, which probably increase the activity by trapping liberated oxidized fragments. Its function is as follows. Lytic polysaccharide monooxygenase (LPMO) that depolymerizes crystalline and amorphous polysaccharides via the oxidation of scissile alpha- or beta-(1-4)-glycosidic bonds, yielding C1 or C4 oxidation products. Catalysis by LPMOs requires the reduction of the active-site copper from Cu(II) to Cu(I) by a reducing agent and H(2)O(2) or O(2) as a cosubstrate. Hydrolyzes weakly barley beta-glucan, carboxymethyl cellulose, lichenan, wheat arabinoxylan and birchwood xylan. Stimulates the hydrolysis of lignocellulosic substrates (such as hydrothermal pretreated wheat straw or steam-pretreated spruce), when combined with other cellulolytic enzymes. The sequence is that of AA9 family lytic polysaccharide monooxygenase H from Thermothelomyces thermophilus (strain ATCC 42464 / BCRC 31852 / DSM 1799) (Sporotrichum thermophile).